A 360-amino-acid polypeptide reads, in one-letter code: ELAV-like protein 2 (360 aa).

Residues 1–36 form a disordered region; that stretch reads METQLSNGPTCNNTANGPTTVNNNCSSPVDSGNTED. 2 consecutive RRM domains span residues 39-117 and 125-205; these read TNLI…YARP and ANLY…FANN. Ser221 carries the phosphoserine modification. The RRM 3 domain maps to 277–355; the sequence is WCIFVYNLAP…RVLQVSFKTN (79 aa).

This sequence belongs to the RRM elav family. In terms of assembly, interacts with IGF2BP1. Interacts with MAP1B light chain LC1. As to expression, brain; neural-specific. Expressed in the hippocampus.

Functionally, RNA-binding protein that binds to the 3' untranslated region (3'UTR) of target mRNAs. Seems to recognize a GAAA motif. Can bind to its own 3'UTR, the FOS 3'UTR and the ID 3'UTR. This Mus musculus (Mouse) protein is ELAV-like protein 2 (Elavl2).